Here is a 327-residue protein sequence, read N- to C-terminus: Aromatase (327 aa).

Cys315 contributes to the heme binding site.

Belongs to the cytochrome P450 family. The cofactor is heme.

It localises to the membrane. It carries out the reaction testosterone + 3 reduced [NADPH--hemoprotein reductase] + 3 O2 = 17beta-estradiol + formate + 3 oxidized [NADPH--hemoprotein reductase] + 4 H2O + 4 H(+). The catalysed reaction is androst-4-ene-3,17-dione + 3 reduced [NADPH--hemoprotein reductase] + 3 O2 = estrone + formate + 3 oxidized [NADPH--hemoprotein reductase] + 4 H2O + 4 H(+). Catalyzes the formation of aromatic C18 estrogens from C19 androgens. This Coturnix japonica (Japanese quail) protein is Aromatase (CYP19A1).